The following is a 780-amino-acid chain: Acetyl-CoA decarbonylase/synthase complex subunit alpha (780 aa).

The [4Fe-4S] cluster site is built by Cys73, Cys76, Cys77, Cys79, Cys84, and Cys93. His116 contacts CO. [Ni-4Fe-4S] cluster-binding residues include His250, Cys278, and Cys317. 4Fe-4S ferredoxin-type domains lie at 399–429 (IDEI…MDAV) and 440–469 (LEEM…VSMV). Positions 409, 412, 415, 419, 449, 452, 455, and 459 each coordinate [4Fe-4S] cluster. Cys517, Cys546, and Cys581 together coordinate [Ni-4Fe-4S] cluster.

Belongs to the Ni-containing carbon monoxide dehydrogenase family. In terms of assembly, heterotetramer of two alpha and two epsilon subunits. The ACDS complex is made up of alpha, epsilon, beta, gamma and delta subunits with a probable stoichiometry of (alpha(2)epsilon(2))(4)-beta(8)-(gamma(1)delta(1))(8). The cofactor is [4Fe-4S] cluster. Requires [Ni-4Fe-4S] cluster as cofactor.

The enzyme catalyses CO + 2 oxidized [2Fe-2S]-[ferredoxin] + H2O = 2 reduced [2Fe-2S]-[ferredoxin] + CO2 + 2 H(+). In terms of biological role, part of the ACDS complex that catalyzes the reversible cleavage of acetyl-CoA, allowing autotrophic growth from CO(2). The alpha-epsilon subcomponent functions as a carbon monoxide dehydrogenase. The polypeptide is Acetyl-CoA decarbonylase/synthase complex subunit alpha (Methanothermobacter thermautotrophicus (strain ATCC 29096 / DSM 1053 / JCM 10044 / NBRC 100330 / Delta H) (Methanobacterium thermoautotrophicum)).